A 399-amino-acid polypeptide reads, in one-letter code: Enoyl-[acyl-carrier-protein] reductase [NADH] (399 aa).

Residues 49-54 (GASSGY), 75-76 (FE), 112-113 (DA), and 141-142 (LA) contribute to the NAD(+) site. Tyr227 is a binding site for substrate. Tyr237 serves as the catalytic Proton donor. NAD(+)-binding positions include Lys246 and 272-274 (VVT).

Belongs to the TER reductase family. As to quaternary structure, monomer.

It catalyses the reaction a 2,3-saturated acyl-[ACP] + NAD(+) = a (2E)-enoyl-[ACP] + NADH + H(+). Its pathway is lipid metabolism; fatty acid biosynthesis. In terms of biological role, involved in the final reduction of the elongation cycle of fatty acid synthesis (FAS II). Catalyzes the reduction of a carbon-carbon double bond in an enoyl moiety that is covalently linked to an acyl carrier protein (ACP). The chain is Enoyl-[acyl-carrier-protein] reductase [NADH] from Pseudomonas putida (strain W619).